Here is a 776-residue protein sequence, read N- to C-terminus: Reticulon-1 (776 aa).

Disordered stretches follow at residues 1–103, 136–168, 204–244, and 285–580; these read MAAP…GEGS, ISESPEELGTPGSSLPDVPGIESRGLFSSDSGI, EVKH…EPAP, and LTEI…APPP. Residues 204–240 show a composition bias toward basic and acidic residues; it reads EVKHQEQNHPELEDKDLDFKNKDTDISIKPEGVREPD. At Ser327 the chain carries Phosphoserine. Positions 328 to 341 are enriched in low complexity; it reads PGSITPPSSGTEPS. Ser350, Ser352, and Ser487 each carry phosphoserine. Residues 497 to 511 show a composition bias toward basic and acidic residues; sequence AIREETGVRAEERAP. One can recognise a Reticulon domain in the interval 589–776; it reads AIDLLYWRDI…KIPGAKRHAE (188 aa). The next 2 helical transmembrane spans lie at 603-623 and 705-725; these read IVFGSFLLLLFSLTQFSVVSV and FAVLMWLLTYVGALFNGLTLL.

In terms of assembly, interacts with NDRG1. Interacts with BACE1. Interacts with TMEM33. Post-translationally, phosphorylated.

The protein resides in the endoplasmic reticulum membrane. Its subcellular location is the golgi apparatus membrane. Inhibits amyloid precursor protein processing, probably by blocking BACE1 activity. The polypeptide is Reticulon-1 (RTN1) (Pan troglodytes (Chimpanzee)).